The following is an 860-amino-acid chain: Leucine--tRNA ligase (860 aa).

Residues 42 to 52 (PYPSGRLHMGH) carry the 'HIGH' region motif. The short motif at 619–623 (KMSKS) is the 'KMSKS' region element. K622 contributes to the ATP binding site.

Belongs to the class-I aminoacyl-tRNA synthetase family.

The protein resides in the cytoplasm. The catalysed reaction is tRNA(Leu) + L-leucine + ATP = L-leucyl-tRNA(Leu) + AMP + diphosphate. The chain is Leucine--tRNA ligase from Salmonella enteritidis PT4 (strain P125109).